We begin with the raw amino-acid sequence, 186 residues long: Large ribosomal subunit protein uL5 (186 aa).

It belongs to the universal ribosomal protein uL5 family. In terms of assembly, part of the 50S ribosomal subunit; part of the 5S rRNA/L5/L18/L25 subcomplex. Contacts the 5S rRNA and the P site tRNA. Forms a bridge to the 30S subunit in the 70S ribosome.

In terms of biological role, this is one of the proteins that bind and probably mediate the attachment of the 5S RNA into the large ribosomal subunit, where it forms part of the central protuberance. In the 70S ribosome it contacts protein S13 of the 30S subunit (bridge B1b), connecting the 2 subunits; this bridge is implicated in subunit movement. Contacts the P site tRNA; the 5S rRNA and some of its associated proteins might help stabilize positioning of ribosome-bound tRNAs. The protein is Large ribosomal subunit protein uL5 of Jannaschia sp. (strain CCS1).